The primary structure comprises 463 residues: Phosphoglucosamine mutase (463 aa).

The active-site Phosphoserine intermediate is the Ser-110. Mg(2+)-binding residues include Ser-110, Asp-255, Asp-257, and Asp-259. Phosphoserine is present on Ser-110.

It belongs to the phosphohexose mutase family. Requires Mg(2+) as cofactor. In terms of processing, activated by phosphorylation.

It catalyses the reaction alpha-D-glucosamine 1-phosphate = D-glucosamine 6-phosphate. Functionally, catalyzes the conversion of glucosamine-6-phosphate to glucosamine-1-phosphate. This Koribacter versatilis (strain Ellin345) protein is Phosphoglucosamine mutase.